Consider the following 283-residue polypeptide: Pantothenate synthetase (283 aa).

33–40 (MGALHEGH) lines the ATP pocket. The Proton donor role is filled by His40. (R)-pantoate is bound at residue Gln64. Gln64 provides a ligand contact to beta-alanine. Residue 150–153 (GEKD) participates in ATP binding. A (R)-pantoate-binding site is contributed by Gln156. ATP is bound by residues Ile179 and 187–190 (MSSR).

This sequence belongs to the pantothenate synthetase family. In terms of assembly, homodimer.

It is found in the cytoplasm. The enzyme catalyses (R)-pantoate + beta-alanine + ATP = (R)-pantothenate + AMP + diphosphate + H(+). It participates in cofactor biosynthesis; (R)-pantothenate biosynthesis; (R)-pantothenate from (R)-pantoate and beta-alanine: step 1/1. Catalyzes the condensation of pantoate with beta-alanine in an ATP-dependent reaction via a pantoyl-adenylate intermediate. In Mesorhizobium japonicum (strain LMG 29417 / CECT 9101 / MAFF 303099) (Mesorhizobium loti (strain MAFF 303099)), this protein is Pantothenate synthetase.